The sequence spans 664 residues: Intraflagellar transport protein 70B (664 aa).

TPR repeat units follow at residues 11-44 (DGEF…SSRS), 45-78 (RAGL…HPEL), 153-186 (YDGQ…SGYQ), 188-220 (DLSY…GIRQ), 385-418 (LTEQ…YDET), 423-456 (IPVL…CNDH), and 458-491 (VWKL…NYDN). Residues 507–534 (YIMTSQNEEAEELMRKIEKEEEQLSYGD) are a coiled coil. One copy of the TPR 8 repeat lies at 543-576 (CIVNLVIGTLYCAKGNYDFGISRVIKSLEPYHKK).

Belongs to the TTC30/dfy-1/fleer family. As to quaternary structure, interacts with the IFT B complex components IFT27, IFT46, IFT74, IFT52, IFT57, IFT80, IFT81 and IFT88. Interacts with KIF17.

It localises to the cell projection. It is found in the cilium. Its function is as follows. Required for polyglutamylation of axonemal tubulin. Plays a role in anterograde intraflagellar transport (IFT), the process by which cilia precursors are transported from the base of the cilium to the site of their incorporation at the tip. This is Intraflagellar transport protein 70B (Ift70b) from Mus musculus (Mouse).